The sequence spans 240 residues: DNA repair protein RecO (240 aa).

It belongs to the RecO family.

Its function is as follows. Involved in DNA repair and RecF pathway recombination. This chain is DNA repair protein RecO, found in Xanthomonas oryzae pv. oryzae (strain MAFF 311018).